The following is a 96-amino-acid chain: Co-chaperonin GroES (96 aa).

This sequence belongs to the GroES chaperonin family. Heptamer of 7 subunits arranged in a ring. Interacts with the chaperonin GroEL.

Its subcellular location is the cytoplasm. Its function is as follows. Together with the chaperonin GroEL, plays an essential role in assisting protein folding. The GroEL-GroES system forms a nano-cage that allows encapsulation of the non-native substrate proteins and provides a physical environment optimized to promote and accelerate protein folding. GroES binds to the apical surface of the GroEL ring, thereby capping the opening of the GroEL channel. This chain is Co-chaperonin GroES, found in Legionella jeonii.